A 374-amino-acid polypeptide reads, in one-letter code: uncharacterized protein (374 aa).

Positions 158, 160, 190, 221, 312, and 314 each coordinate a divalent metal cation.

Belongs to the metallophosphoesterase superfamily. The cofactor is a divalent metal cation.

This is an uncharacterized protein from Campylobacter jejuni subsp. jejuni serotype O:2 (strain ATCC 700819 / NCTC 11168).